The primary structure comprises 174 residues: MKEDAGNPLHLTSLNHVSVLCRSVDESMNFYQKVLGFIPIRRPESLNFEGAWLFGHGIGIHLLCAPEPEKLPKKTAINPKDNHISFQCESMGVVEKKLEEMGIDYVRALVEEGGIQVDQLFFHDPDGFMIEICNCDSLPVVPLVGEMARSCSRVKLHQMVQPQPQTQIHQVVYP.

One can recognise a VOC domain in the interval 13 to 135 (SLNHVSVLCR…DGFMIEICNC (123 aa)). The active-site Proton donor/acceptor is the glutamate 131.

This sequence belongs to the glyoxalase I family. In terms of tissue distribution, mostly expressed in roots, and, to a lower extent, in leaves, flowers, seeds and siliques.

The protein localises to the cell membrane. Its subcellular location is the cytoplasm. Functionally, involved in the detoxification and scavenging of methylglyoxal (MG), a cytotoxic aldehyde produced in response to primary metabolism alteration observed during biotic and abiotic stresses. Modulates cross-talk between salicylic acid (SA) and jasmonic acid (JA) signaling pathways during defense responses to pathogens such as Botrytis cinerea. The sequence is that of Glyoxylase I 4 from Arabidopsis thaliana (Mouse-ear cress).